Here is a 221-residue protein sequence, read N- to C-terminus: NAD(P)H-hydrate epimerase (221 aa).

One can recognise a YjeF N-terminal domain in the interval 10–210 (MQQIDNYTIE…DVGMLIPDDF (201 aa)). (6S)-NADPHX is bound at residue 58-62 (NNGAD). The K(+) site is built by N59 and D120. (6S)-NADPHX-binding positions include 124–130 (GVGLNNV) and D153. K(+) is bound at residue T156.

The protein belongs to the NnrE/AIBP family. It depends on K(+) as a cofactor.

The enzyme catalyses (6R)-NADHX = (6S)-NADHX. The catalysed reaction is (6R)-NADPHX = (6S)-NADPHX. Catalyzes the epimerization of the S- and R-forms of NAD(P)HX, a damaged form of NAD(P)H that is a result of enzymatic or heat-dependent hydration. This is a prerequisite for the S-specific NAD(P)H-hydrate dehydratase to allow the repair of both epimers of NAD(P)HX. The sequence is that of NAD(P)H-hydrate epimerase from Leuconostoc mesenteroides subsp. mesenteroides (strain ATCC 8293 / DSM 20343 / BCRC 11652 / CCM 1803 / JCM 6124 / NCDO 523 / NBRC 100496 / NCIMB 8023 / NCTC 12954 / NRRL B-1118 / 37Y).